Reading from the N-terminus, the 628-residue chain is ATP-binding cassette sub-family F member 2 (628 aa).

The interval 1–57 (MPSDLAKKKAAKKKEAAKARQRPRKGHEENGDAVTEPQVAEEKIEEANGRETTGDGE) is disordered. Residues 40-53 (AEEKIEEANGRETT) are compositionally biased toward basic and acidic residues. ABC transporter domains are found at residues 91-330 (VHII…ENQM) and 401-618 (IMVQ…VDEE). 123–130 (GLNGIGKS) contacts ATP. The residue at position 223 (Thr-223) is a Phosphothreonine. Position 309 is an N6-acetyllysine (Lys-309). 435–442 (GPNGAGKS) provides a ligand contact to ATP. Residue Ser-517 is modified to Phosphoserine.

Belongs to the ABC transporter superfamily. ABCF family. EF3 subfamily.

This Mus musculus (Mouse) protein is ATP-binding cassette sub-family F member 2.